The sequence spans 62 residues: Conotoxin Sr5.6 (62 aa).

The signal sequence occupies residues 1–22 (MRCLPVFVILLLLIASASSVDA). The propeptide occupies 23–44 (QLKTKDDVPLTSVHDNAKGTQH). The residue at position 61 (Pro61) is a Proline amide.

It belongs to the conotoxin T superfamily. Contains 2 disulfide bonds that can be either 'C1-C3, C2-C4' or 'C1-C4, C2-C3', since these disulfide connectivities have been observed for conotoxins with cysteine framework V (for examples, see AC P0DQQ7 and AC P81755). As to expression, expressed by the venom duct.

The protein localises to the secreted. This Conus spurius (Alphabet cone) protein is Conotoxin Sr5.6.